The following is a 366-amino-acid chain: Uroporphyrinogen decarboxylase (366 aa).

Substrate-binding positions include 28–32 (RQAGR), Asp-78, Tyr-160, Thr-215, and His-333.

It belongs to the uroporphyrinogen decarboxylase family. In terms of assembly, homodimer.

The protein resides in the cytoplasm. It carries out the reaction uroporphyrinogen III + 4 H(+) = coproporphyrinogen III + 4 CO2. It functions in the pathway porphyrin-containing compound metabolism; protoporphyrin-IX biosynthesis; coproporphyrinogen-III from 5-aminolevulinate: step 4/4. In terms of biological role, catalyzes the decarboxylation of four acetate groups of uroporphyrinogen-III to yield coproporphyrinogen-III. This chain is Uroporphyrinogen decarboxylase, found in Paraburkholderia xenovorans (strain LB400).